We begin with the raw amino-acid sequence, 419 residues long: uncharacterized protein (419 aa).

The next 7 membrane-spanning stretches (helical) occupy residues 16–36 (IMAK…LVVT), 186–206 (LVYI…SMIA), 235–255 (LLGI…AGSL), 283–303 (VIYA…LAAF), 318–338 (ITPM…GLNA), 340–360 (DAGF…IMFL), and 369–389 (FWQA…LAVI).

This sequence to M.jannaschii MJ1024.

It localises to the cell membrane. This is an uncharacterized protein from Bacillus subtilis (strain 168).